The sequence spans 491 residues: Katanin p60 ATPase-containing subunit A1 (491 aa).

Residues 1–29 form an interaction with KATNB1 region; that stretch reads MSLQMIVENVKLAREYALLGNYDSAMVYY. The segment at 1–75 is interaction with dynein and NDEL1; the sequence is MSLQMIVENV…VKDIMKTLES (75 aa). An interaction with microtubules; sufficient for microtubule severing activity region spans residues 1-185; that stretch reads MSLQMIVENV…EPEANKFDGT (185 aa). A Phosphoserine; by DYRK2 modification is found at S42. The segment at 101–182 is disordered; the sequence is PVPVERRPLP…AVTEPEANKF (82 aa). The segment covering 145–169 has biased composition (basic and acidic residues); it reads HNDRGKAVRSREKKEQSKGREEKNK. 249 to 256 lines the ATP pocket; that stretch reads GPPGTGKT.

The protein belongs to the AAA ATPase family. Katanin p60 subunit A1 subfamily. As to quaternary structure, can homooligomerize into hexameric rings, which may be promoted by interaction with microtubules. Interacts with KATNB1, which may serve as a targeting subunit. Interacts with ASPM; the katanin complex formation KATNA1:KATNB1 is required for the association of ASPM. Interacts with dynein and NDEL1. Associates with the E3 ligase complex containing DYRK2, EDD/UBR5, DDB1 and DCAF1 proteins (EDVP complex). Interacts with KLHL42 (via the kelch domains). Interacts with CUL3; the interaction is enhanced by KLHL42. Interacts with KATNB1 and KATNBL1. Interacts with CAMSAP2 and CAMSAP3; leading to regulate the length of CAMSAP-decorated microtubule stretches. In terms of processing, phosphorylation by DYRK2 triggers ubiquitination and subsequent degradation. Post-translationally, ubiquitinated by the BCR(KLHL42) E3 ubiquitin ligase complex, leading to its proteasomal degradation. Ubiquitinated by the EDVP E3 ligase complex and subsequently targeted for proteasomal degradation.

It is found in the cytoplasm. It localises to the midbody. The protein resides in the cytoskeleton. The protein localises to the microtubule organizing center. Its subcellular location is the centrosome. It is found in the spindle pole. It localises to the spindle. It catalyses the reaction n ATP + n H2O + a microtubule = n ADP + n phosphate + (n+1) alpha/beta tubulin heterodimers.. Its activity is regulated as follows. ATPase activity is stimulated by microtubules, which promote homooligomerization. ATP-dependent microtubule severing is stimulated by interaction with KATNB1. In terms of biological role, catalytic subunit of a complex which severs microtubules in an ATP-dependent manner. Microtubule severing may promote rapid reorganization of cellular microtubule arrays and the release of microtubules from the centrosome following nucleation. Microtubule release from the mitotic spindle poles may allow depolymerization of the microtubule end proximal to the spindle pole, leading to poleward microtubule flux and poleward motion of chromosome. The function in regulating microtubule dynamics at spindle poles seems to depend on the association of the katanin KATNA1:KATNB1 complex with ASPM which recruits it to microtubules. Reversely KATNA1:KATNB1 can enhance ASPM blocking activity on microtubule minus-end growth. Microtubule release within the cell body of neurons may be required for their transport into neuronal processes by microtubule-dependent motor proteins. This transport is required for axonal growth. In Mus musculus (Mouse), this protein is Katanin p60 ATPase-containing subunit A1 (Katna1).